Consider the following 370-residue polypeptide: Proline-rich protein 5-like (370 aa).

Serine 28 carries the post-translational modification Phosphoserine. The segment at 327–370 (PTFPPPHRQCSSEPSILDSPDEMELEDVASGSQEDSELNCASLS) is disordered.

This sequence belongs to the PROTOR family. Interacts with the mammalian target of rapamycin complex 2 (mTORC2) which contains MTOR, MLST8, PRR5, RICTOR, MAPKAP1 and DEPTOR. Interacts with RFFL. Interacts (via C-terminus) with ZFP36 (via C-terminus); this interaction may accelerate ZFP36-mediated mRNA decay during stress. Interacts with RICTOR. Post-translationally, ubiquitinated. Ubiquitination by RFFL promotes proteasomal degradation of PRR5L thereby modifying the substrate-specific activity of the mTORC2 complex. Ubiquitination by RFFL is stimulated by LPA/lysophosphatidic acid.

Associates with the mTORC2 complex that regulates cellular processes including survival and organization of the cytoskeleton. Regulates the activity of the mTORC2 complex in a substrate-specific manner preventing for instance the specific phosphorylation of PKCs and thereby controlling cell migration. Plays a role in the stimulation of ZFP36-mediated mRNA decay of several ZFP36-associated mRNAs, such as TNF-alpha and GM-CSF, in response to stress. Required for ZFP36 localization to cytoplasmic stress granule (SG) and P-body (PB) in response to stress. This Rattus norvegicus (Rat) protein is Proline-rich protein 5-like (Prr5l).